The sequence spans 95 residues: Succinate dehydrogenase membrane anchor subunit (95 aa).

Residues 1–19 (MYKTLLAQVFFHSIAKKKL) are Mitochondrial matrix-facing. A helical transmembrane segment spans residues 20 to 40 (YFFWLPRLFSLLLVPGFLFDI). Position 41 (Glu-41) is a topological domain, mitochondrial intermembrane. Residues 42 to 62 (ILFLFHPIILLHASLGLSVII) form a helical membrane-spanning segment. His-53 is a heme binding site. At 63–74 (EDYIHIETIKFQ) the chain is on the mitochondrial matrix side. Tyr-65 contacts a ubiquinone. A helical membrane pass occupies residues 75–95 (YLSLIKLLLVLLINLNILYLL).

In terms of assembly, part of an enzyme complex containing four subunits: a flavoprotein, an iron-sulfur protein, plus two membrane-anchoring proteins. Requires heme as cofactor.

The protein localises to the mitochondrion inner membrane. The protein operates within carbohydrate metabolism; tricarboxylic acid cycle. Its function is as follows. Membrane-anchoring subunit of succinate dehydrogenase (SDH). In Porphyra purpurea (Red seaweed), this protein is Succinate dehydrogenase membrane anchor subunit (SDH4).